The following is a 483-amino-acid chain: Keratin, type II cytoskeletal 7 (483 aa).

Residue S2 is modified to N-acetylserine. A phosphoserine mark is found at S2, S6, and S7. The tract at residues 2-107 (SVQFSSQTFS…DPQIQQVRKE (106 aa)) is head. S12 is a glycosylation site (O-linked (GlcNAc) serine). Residues 14 to 37 (SAAFPRRGGQGRLSSVSSRAGSVS) form a disordered region. A Dimethylated arginine; alternate modification is found at R20. R20 bears the Omega-N-methylarginine; alternate mark. Over residues 25 to 37 (RLSSVSSRAGSVS) the composition is skewed to low complexity. A phosphoserine mark is found at S63 and S88. The tract at residues 107–143 (EEREQIKTLNNKFASFIDKVRFLEQQNQMLETKWRLL) is coil 1A. The region spanning 108 to 420 (EREQIKTLNN…KLLEGEESRL (313 aa)) is the IF rod domain. T114 carries the post-translational modification Phosphothreonine. The interval 144–161 (QEQKSSKGSSLPAIFEAH) is linker 1. K147 is covalently cross-linked (Glycyl lysine isopeptide (Lys-Gly) (interchain with G-Cter in SUMO2)). The tract at residues 162-253 (IANLRRQLDG…TLYEMELNEL (92 aa)) is coil 1B. Residue K196 is modified to N6-acetyllysine. A linker 12 region spans residues 254-277 (QTQISDTSVVLSMDNSRSLDLDSI). Phosphoserine occurs at positions 269 and 271. The interval 278-416 (ISEVKAQYED…ATYRKLLEGE (139 aa)) is coil 2. Residues K282 and K303 each participate in a glycyl lysine isopeptide (Lys-Gly) (interchain with G-Cter in SUMO2) cross-link. Phosphothreonine is present on T306. Residues K313 and K348 each participate in a glycyl lysine isopeptide (Lys-Gly) (interchain with G-Cter in SUMO2) cross-link. Residues 417 to 483 (ESRLSGDGVG…TSSSRRSVRN (67 aa)) are tail.

The protein belongs to the intermediate filament family. As to quaternary structure, heterotetramer of two type I and two type II keratins. Interacts with eukaryotic translation initiator factor 3 (eIF3) subunit EIF3S10. Interacts with GPER1. Post-translationally, arg-20 is dimethylated, probably to asymmetric dimethylarginine.

Its function is as follows. Blocks interferon-dependent interphase and stimulates DNA synthesis in cells. This Potorous tridactylus (Potoroo) protein is Keratin, type II cytoskeletal 7.